Consider the following 125-residue polypeptide: Thioredoxin H-type (125 aa).

The 111-residue stretch at 2 to 112 folds into the Thioredoxin domain; the sequence is AEGNVFACHS…LERKVAALAA (111 aa). Residues Cys38 and Cys41 each act as nucleophile in the active site. Cysteines 38 and 41 form a disulfide.

Belongs to the thioredoxin family. Plant H-type subfamily.

The protein resides in the cytoplasm. Participates in various redox reactions through the reversible oxidation of the active center dithiol to a disulfide. The H form is known to activate a number of cytosolic enzymes. The protein is Thioredoxin H-type (SB09) of Picea mariana (Black spruce).